The sequence spans 353 residues: uncharacterized protein (353 aa).

Residues 1-23 form the signal peptide; the sequence is MSAGKGLLLVICLLFLPLKSAMA.

This sequence to E.coli YqiI.

In terms of biological role, may be involved in a fimbrial system chaperoned by YbgP and exported by YbgQ. This is an uncharacterized protein from Escherichia coli (strain K12).